The following is a 123-amino-acid chain: Guanine nucleotide exchange factor MSS4 (123 aa).

Position 1 is an N-acetylmethionine (methionine 1). One can recognise an MSS4 domain in the interval 9–123 (ELVSAEGRNR…YVALERVSHE (115 aa)). Residues cysteine 23, cysteine 26, cysteine 94, and cysteine 97 each contribute to the Zn(2+) site.

This sequence belongs to the DSS4/MSS4 family. As to quaternary structure, interacts with RAB8A. In terms of tissue distribution, ubiquitous.

Its function is as follows. Guanine-nucleotide-releasing protein that acts on members of the SEC4/YPT1/RAB subfamily. Stimulates GDP release from both YPT1, RAB3A and RAB10, but is less active on these proteins than on the SEC4 protein. Might play a general role in vesicular transport. The sequence is that of Guanine nucleotide exchange factor MSS4 (RABIF) from Homo sapiens (Human).